Consider the following 467-residue polypeptide: Protein indeterminate-domain 6, chloroplastic (467 aa).

The transit peptide at 1–20 (MSSSYNTIALSSTPTFLLSS) directs the protein to the chloroplast. Residues 38–65 (TMVQQQPTSSVAPPPKKRRNQPGNPNPD) are disordered. The span at 39–48 (MVQQQPTSSV) shows a compositional bias: polar residues. Residue Ser72 is modified to Phosphoserine. C2H2-type zinc fingers lie at residues 82–104 (FLCE…RRGH) and 123–153 (YLCP…YRKH). The C2H2-type 2; degenerate zinc finger occupies 158–181 (WKCDKCSKRYAVQSDWKAHSKTCG). Zn(2+) is bound by residues Cys160, Cys163, His176, Cys180, Cys187, Cys189, His202, and Cys206. The CCHC-type 2; atypical zinc-finger motif lies at 185–208 (YRCDCGTIFSRRDSYITHRAFCDA). The SHR-binding stretch occupies residues 195-207 (RRDSYITHRAFCD). A disordered region spans residues 440-467 (NGRGGRSGGPPLDAEMKFSHPNHPYGKA).

It is found in the plastid. The protein localises to the chloroplast. Probable transcription factor. This is Protein indeterminate-domain 6, chloroplastic from Arabidopsis thaliana (Mouse-ear cress).